A 286-amino-acid chain; its full sequence is MKNVLSIQSHVVFGYAGNKSSTFPMQLSGIDVWALNTVQFSNHTQYGKWTGMVVPHQQIPEIADGIDAIGELKNCDAVLSGYIGSADQVAEIVKVSHLVKTRNAAALYLCDPVMGSAEKGCVVADGVREGLIDIALPQADIITPNLLELRELSGLRAENFEQAVIAAQHLLTKGPKTVIVKHLGSAGKYPGKFDMLLANREGVWCLSRPLYPFAKDPVGVGDLIAGLFLANLLNGKSEPEAFELTGNAVNDVMEITHKLNSYELQLIEARHAIMAPQNRYKAEKIA.

Substrate is bound by residues Ser-9 and 44 to 45 (TQ). Asp-111, Glu-148, and Lys-181 together coordinate ATP. A substrate-binding site is contributed by Asp-222.

This sequence belongs to the pyridoxine kinase family. PdxY subfamily. In terms of assembly, homodimer. The cofactor is Mg(2+).

It catalyses the reaction pyridoxal + ATP = pyridoxal 5'-phosphate + ADP + H(+). It functions in the pathway cofactor metabolism; pyridoxal 5'-phosphate salvage; pyridoxal 5'-phosphate from pyridoxal: step 1/1. Pyridoxal kinase involved in the salvage pathway of pyridoxal 5'-phosphate (PLP). Catalyzes the phosphorylation of pyridoxal to PLP. The sequence is that of Pyridoxal kinase PdxY from Actinobacillus succinogenes (strain ATCC 55618 / DSM 22257 / CCUG 43843 / 130Z).